The sequence spans 166 residues: Cold-inducible RNA-binding protein B (166 aa).

The region spanning 5-83 is the RRM domain; the sequence is GKLFIGGLNF…RQIRVDQAGK (79 aa). Positions 68–166 are disordered; it reads GKAVDGRQIR…DSYDSYATHE (99 aa). Residues 92–115 show a composition bias toward gly residues; it reads YRGGSSGGRGFFRGGRGRGGGDRG. The segment covering 133 to 149 has biased composition (low complexity); it reads GSRDYYSSGRSQGSYGD. The span at 157-166 shows a compositional bias: basic and acidic residues; the sequence is DSYDSYATHE.

In terms of assembly, interacts with prmt1. Interacts with elavl1/elrA (via RRM3). Associates with ribosomes. In terms of processing, methylated on arginine residues within RGG motifs. Methylation by prmt1 promotes cytoplasmic accumulation. In adults, most abundant in testis, ovary, brain and liver, with lower expression in kidney and heart.

The protein resides in the nucleus. The protein localises to the nucleoplasm. Its subcellular location is the cytoplasm. Functionally, cold-inducible mRNA binding protein. Acts cooperatively with elavl1/elrA to stabilize AU-rich element (ARE)-containing mRNAs by binding to them and inhibiting their deadenylation. Essential for embryonic gastrulation and neural development, acting to maintain the expression of a set of adhesion molecules, and cell movement during embryogenesis. Required for pronephros development. The polypeptide is Cold-inducible RNA-binding protein B (cirbp-b) (Xenopus laevis (African clawed frog)).